Reading from the N-terminus, the 252-residue chain is Adenosylcobinamide-GDP ribazoletransferase (252 aa).

Transmembrane regions (helical) follow at residues 35–55 (AMLP…FYIL), 58–78 (IFPA…LIGG), 113–133 (FAVL…SFII), 139–159 (YAII…FLIG), 170–190 (LFIE…MIVP), 192–212 (VLLI…IITL), and 231–251 (GANN…LLYI).

This sequence belongs to the CobS family. It depends on Mg(2+) as a cofactor.

The protein localises to the cell membrane. It catalyses the reaction alpha-ribazole + adenosylcob(III)inamide-GDP = adenosylcob(III)alamin + GMP + H(+). The catalysed reaction is alpha-ribazole 5'-phosphate + adenosylcob(III)inamide-GDP = adenosylcob(III)alamin 5'-phosphate + GMP + H(+). It participates in cofactor biosynthesis; adenosylcobalamin biosynthesis; adenosylcobalamin from cob(II)yrinate a,c-diamide: step 7/7. In terms of biological role, joins adenosylcobinamide-GDP and alpha-ribazole to generate adenosylcobalamin (Ado-cobalamin). Also synthesizes adenosylcobalamin 5'-phosphate from adenosylcobinamide-GDP and alpha-ribazole 5'-phosphate. In Clostridium tetani (strain Massachusetts / E88), this protein is Adenosylcobinamide-GDP ribazoletransferase.